The sequence spans 955 residues: MPFALGQRWISDTETDLGLGTVVAVEGRMVTLLFPATGENRMYAKEEAPVTRVSFNVGDQIATHEDWTMTVEEVQEKNGLLIYVGVRTDNDEPVALKEVFLSNFIKFNKPQDRLFAGQIDRMSRFTLRYEALINQHKRRLNPTRGLAGGRVSLIPHQLYIAHEVGHRYAPRVLLADEVGLGKTIEAGMIIHQQLLSGRAHRVLILLPETLQHQWLVEMLRRFNLHFSLFDEERCIEAFADAENPFETEQLVICSLDFLRKKRRRFEQVLEAEWDLLVVDEAHHLEWSIDAPSRAYEMVEALAEQVPGVLLLTATPDQLGHQSHFARLRLLDPERFYDYEAFLAEEQAYGKVASAAQELLDGETLSDEARQILASQLEGLDMSDAAARQQAVAKLLDQHGTGRVLFRNSRANIQGFPERHLNVYPMPLPEQYKTAIKVMGMMGGNGGDLQTRALRYLYPEKIFQQFEGENATWTQFDPRVDWLLELLLSARQQKVLVICSEAATAIALEEALRTREGIRGTVFHEGMSILERDKASAYFAQEDGGAQVLLCSEIGSEGRNFQFASHLVLFDLPLNPDLLEQRIGRLDRIGQQNTVEIHVPYLEGTAQRALQLWYHDGLDAFEQTCPTARPVFEAVRDELFELLAANTGDQVTLDALLIKTRELHEPLKARLEQGRDRLLEIHSSGGAAAQLLVDKLAAEDDDTGMVSFALKMFDEIGVNQDDRGENALVLTPGDHMLVSSFPGLPQDGMTITFDRPTALSRDDMALLSWDHPMMRGGIDLILGSEIGATSVALLKNKALPIGSILLELIFVAESAAHPQLYRFMPPTPIRLLMDKNGQNLGEKVAFDAFNRQLTPVNRHLGSKLVTASQPVIHGLIGKGQVIAEELKAGIVDKARTRMAQTLQQDLDRLEALKAVNPNVRDSELDYLRNLQAELHHLIDQTQLKLDAIRFIVVTHN.

Positions 163-333 (EVGHRYAPRV…FARLRLLDPE (171 aa)) constitute a Helicase ATP-binding domain. 176–183 (DEVGLGKT) is an ATP binding site. Residues 279 to 282 (DEAH) carry the DEAH box motif. The region spanning 478–642 (RVDWLLELLL…AVRDELFELL (165 aa)) is the Helicase C-terminal domain.

Belongs to the SNF2/RAD54 helicase family. RapA subfamily. In terms of assembly, interacts with the RNAP. Has a higher affinity for the core RNAP than for the holoenzyme. Its ATPase activity is stimulated by binding to RNAP.

Its function is as follows. Transcription regulator that activates transcription by stimulating RNA polymerase (RNAP) recycling in case of stress conditions such as supercoiled DNA or high salt concentrations. Probably acts by releasing the RNAP, when it is trapped or immobilized on tightly supercoiled DNA. Does not activate transcription on linear DNA. Probably not involved in DNA repair. This is RNA polymerase-associated protein RapA from Aeromonas salmonicida (strain A449).